A 202-amino-acid chain; its full sequence is UDP-N-acetylglucosamine transferase subunit ALG13 (202 aa).

The protein belongs to the glycosyltransferase 28 family. In terms of assembly, heterodimer with ALG14 to form a functional enzyme.

The protein localises to the endoplasmic reticulum. It catalyses the reaction an N-acetyl-alpha-D-glucosaminyl-diphospho-di-trans,poly-cis-dolichol + UDP-N-acetyl-alpha-D-glucosamine = an N,N'-diacetylchitobiosyl-diphospho-di-trans,poly-cis-dolichol + UDP + H(+). Its function is as follows. Involved in protein N-glycosylation. Essential for the second step of the dolichol-linked oligosaccharide pathway. This chain is UDP-N-acetylglucosamine transferase subunit ALG13 (ALG13), found in Saccharomyces cerevisiae (strain ATCC 204508 / S288c) (Baker's yeast).